A 239-amino-acid polypeptide reads, in one-letter code: Pyridoxine 5'-phosphate synthase (239 aa).

3-amino-2-oxopropyl phosphate is bound at residue Asn-7. Asp-9 to His-10 is a 1-deoxy-D-xylulose 5-phosphate binding site. Residue Arg-18 participates in 3-amino-2-oxopropyl phosphate binding. The active-site Proton acceptor is His-43. Residues Arg-45 and His-50 each contribute to the 1-deoxy-D-xylulose 5-phosphate site. Glu-70 (proton acceptor) is an active-site residue. Thr-100 serves as a coordination point for 1-deoxy-D-xylulose 5-phosphate. The Proton donor role is filled by His-191. Residues Gly-192 and Gly-213–His-214 contribute to the 3-amino-2-oxopropyl phosphate site.

Belongs to the PNP synthase family. In terms of assembly, homooctamer; tetramer of dimers.

Its subcellular location is the cytoplasm. It catalyses the reaction 3-amino-2-oxopropyl phosphate + 1-deoxy-D-xylulose 5-phosphate = pyridoxine 5'-phosphate + phosphate + 2 H2O + H(+). The protein operates within cofactor biosynthesis; pyridoxine 5'-phosphate biosynthesis; pyridoxine 5'-phosphate from D-erythrose 4-phosphate: step 5/5. Its function is as follows. Catalyzes the complicated ring closure reaction between the two acyclic compounds 1-deoxy-D-xylulose-5-phosphate (DXP) and 3-amino-2-oxopropyl phosphate (1-amino-acetone-3-phosphate or AAP) to form pyridoxine 5'-phosphate (PNP) and inorganic phosphate. The chain is Pyridoxine 5'-phosphate synthase from Citrifermentans bemidjiense (strain ATCC BAA-1014 / DSM 16622 / JCM 12645 / Bem) (Geobacter bemidjiensis).